The sequence spans 339 residues: 3-isopropylmalate dehydrogenase (339 aa).

4 residues coordinate substrate: R87, R97, R124, and D214. Positions 214, 238, and 242 each coordinate Mg(2+). Residue 274 to 286 participates in NAD(+) binding; that stretch reads GSAPDIAGQGIAD.

Belongs to the isocitrate and isopropylmalate dehydrogenases family. LeuB type 2 subfamily. As to quaternary structure, homodimer. It depends on Mg(2+) as a cofactor. Mn(2+) serves as cofactor.

The protein resides in the cytoplasm. It catalyses the reaction (2R,3S)-3-isopropylmalate + NAD(+) = 4-methyl-2-oxopentanoate + CO2 + NADH. The protein operates within amino-acid biosynthesis; L-leucine biosynthesis; L-leucine from 3-methyl-2-oxobutanoate: step 3/4. Its function is as follows. Catalyzes the oxidation of 3-carboxy-2-hydroxy-4-methylpentanoate (3-isopropylmalate) to 3-carboxy-4-methyl-2-oxopentanoate. The product decarboxylates to 4-methyl-2 oxopentanoate. This Mycobacterium ulcerans (strain Agy99) protein is 3-isopropylmalate dehydrogenase.